Here is a 342-residue protein sequence, read N- to C-terminus: tRNA N6-adenosine threonylcarbamoyltransferase (342 aa).

Fe cation is bound by residues His-115 and His-119. Substrate is bound by residues 137-141 (IVSGG), Asp-170, Gly-183, Asp-187, and Asn-276. Asp-304 is a binding site for Fe cation.

It belongs to the KAE1 / TsaD family. Fe(2+) is required as a cofactor.

It localises to the cytoplasm. The enzyme catalyses L-threonylcarbamoyladenylate + adenosine(37) in tRNA = N(6)-L-threonylcarbamoyladenosine(37) in tRNA + AMP + H(+). In terms of biological role, required for the formation of a threonylcarbamoyl group on adenosine at position 37 (t(6)A37) in tRNAs that read codons beginning with adenine. Is involved in the transfer of the threonylcarbamoyl moiety of threonylcarbamoyl-AMP (TC-AMP) to the N6 group of A37, together with TsaE and TsaB. TsaD likely plays a direct catalytic role in this reaction. The polypeptide is tRNA N6-adenosine threonylcarbamoyltransferase (Staphylococcus haemolyticus (strain JCSC1435)).